The sequence spans 401 residues: MAEKVVLAYSGGLDTSIIIPWLKENYGYEVIAMVADVGQGEELEPLREKAIKSGAAKIYIEDVKEEFVRDFVFPMLKAGAVYENKYLLGTSVARPLIAKKLVEIAEKEGAVAVAHGATGKGNDQVRFELTVKALNPDLKIIAPWREWEIKSREDAIDYAEKRGIPVPVTKKQPYSMDRNLWHLSHEGGILEDPAVEPPEDVLLLTNPPEKAPDQPEYVEIEFVKGEPVAVNGEKLSPVELIFKLNELGGKHGIGIADMVENRLVGMKSRGVYETPGGTILTFAHRELESLTLDRQTMHFKQMVALKYAELIYDGLWFTPLREALEAFVDKTQETVTGKVRVKLYKGNIYPAGITSPYSLYVKDLATFGEDNLYNQKDAEGFINLFGLPLKVRAMTQKPYQK.

Residues 8–16 and A35 each bind ATP; that span reads AYSGGLDTS. Positions 86 and 91 each coordinate L-citrulline. Residue G116 coordinates ATP. The L-aspartate site is built by T118, N122, and D123. N122 provides a ligand contact to L-citrulline. L-citrulline is bound by residues R126, S175, S184, E260, and Y272.

This sequence belongs to the argininosuccinate synthase family. Type 1 subfamily. As to quaternary structure, homotetramer.

It localises to the cytoplasm. The catalysed reaction is L-citrulline + L-aspartate + ATP = 2-(N(omega)-L-arginino)succinate + AMP + diphosphate + H(+). The protein operates within amino-acid biosynthesis; L-arginine biosynthesis; L-arginine from L-ornithine and carbamoyl phosphate: step 2/3. The protein is Argininosuccinate synthase of Carboxydothermus hydrogenoformans (strain ATCC BAA-161 / DSM 6008 / Z-2901).